The primary structure comprises 150 residues: Male-specific protein scotti (150 aa).

Residues 60-84 (PPMAVFPARGGPNGGPPRLRKKRSF) form a disordered region. N-linked (GlcNAc...) asparagine glycosylation occurs at N131.

Belongs to the male-specific scotti family.

Its function is as follows. Post-meiotically transcribed gene that has a role in late spermiogenesis; required for actin cone progression during spermatid individualization. The polypeptide is Male-specific protein scotti (Drosophila yakuba (Fruit fly)).